Consider the following 233-residue polypeptide: Glycerol-3-phosphate acyltransferase (233 aa).

5 helical membrane-spanning segments follow: residues 7–27 (WIII…GYII), 94–114 (ISIV…YIGF), 127–147 (VIAI…IVAF), 153–173 (SIGS…GVLI), and 185–205 (ISYE…LLII).

It belongs to the PlsY family. Probably interacts with PlsX.

Its subcellular location is the cell membrane. The enzyme catalyses an acyl phosphate + sn-glycerol 3-phosphate = a 1-acyl-sn-glycero-3-phosphate + phosphate. Its pathway is lipid metabolism; phospholipid metabolism. In terms of biological role, catalyzes the transfer of an acyl group from acyl-phosphate (acyl-PO(4)) to glycerol-3-phosphate (G3P) to form lysophosphatidic acid (LPA). This enzyme utilizes acyl-phosphate as fatty acyl donor, but not acyl-CoA or acyl-ACP. The chain is Glycerol-3-phosphate acyltransferase from Acholeplasma laidlawii.